The sequence spans 155 residues: Microsomal glutathione S-transferase 1 (155 aa).

Residues 3–9 lie on the Lumenal side of the membrane; it reads DLTELMK. Residues 10 to 33 traverse the membrane as a helical segment; the sequence is NEVFMAFASYATIVLSKMMFMSTA. The Cytoplasmic segment spans residues 34-62; the sequence is TAFYRLTRKVFANPEDCSSFGKGENAKKY. Arg38 lines the glutathione pocket. N6-acetyllysine occurs at positions 42, 55, and 60. A helical membrane pass occupies residues 63 to 96; that stretch reads LRTDERVERVRRAHLNDLENIVPFLGIGLLYSLS. The glutathione site is built by Arg73, Arg74, His76, and Glu81. Residues 97–99 lie on the Lumenal side of the membrane; that stretch reads GPD. Residues 100 to 123 traverse the membrane as a helical segment; the sequence is LSTAILHFRLFVGARIYHTIAYLT. Residue Tyr121 participates in glutathione binding. The Cytoplasmic segment spans residues 124 to 128; sequence PLPQP. A helical membrane pass occupies residues 129–148; sequence NRGLAFFLGYGVTLSMAYRL. Over 149–155 the chain is Lumenal; sequence LKSRLYL.

The protein belongs to the MAPEG family. In terms of assembly, homotrimer; The trimer binds only one molecule of glutathione.

It localises to the endoplasmic reticulum membrane. It is found in the mitochondrion outer membrane. The catalysed reaction is RX + glutathione = an S-substituted glutathione + a halide anion + H(+). Its function is as follows. Conjugation of reduced glutathione to a wide number of exogenous and endogenous hydrophobic electrophiles. This Sus scrofa (Pig) protein is Microsomal glutathione S-transferase 1 (MGST1).